The following is a 237-amino-acid chain: MAYARVLLKLSGEALMGDQSYGIDPAIVQSIAEDVAKVVAKGTQLAIVVGGGNIFRGLKGSAAGMDRATADYVGMLATVMNAITLQDGLERAGVPTRVQTAIEMQEVAEPYIRRRAIRHLEKGRVVVFGGGCGNPFFTTDTTASLRAAEINADVVFKATKVDGVYDRDPKRFPDATRYDSLTFQQVLSGELAVMDSTAIALCKDNNIPIVVFDLFEPGNIGKAVAGEAIGSRISNAT.

Residue 9 to 12 (KLSG) coordinates ATP. Glycine 51 lines the UMP pocket. The ATP site is built by glycine 52 and arginine 56. UMP contacts are provided by residues aspartate 71 and 132–139 (CGNPFFTT). Residues threonine 159, tyrosine 165, and aspartate 168 each coordinate ATP.

This sequence belongs to the UMP kinase family. In terms of assembly, homohexamer.

The protein localises to the cytoplasm. It carries out the reaction UMP + ATP = UDP + ADP. Its pathway is pyrimidine metabolism; CTP biosynthesis via de novo pathway; UDP from UMP (UMPK route): step 1/1. Its activity is regulated as follows. Inhibited by UTP. Its function is as follows. Catalyzes the reversible phosphorylation of UMP to UDP. This chain is Uridylate kinase, found in Prochlorococcus marinus (strain MIT 9313).